We begin with the raw amino-acid sequence, 283 residues long: 9,11-endoperoxide prostaglandin H2 reductase (283 aa).

NADP(+) contacts are provided by residues 23 to 24 and aspartate 48; that span reads VW. Catalysis depends on tyrosine 53, which acts as the Proton donor. Histidine 111 serves as a coordination point for substrate. NADP(+)-binding positions include 140 to 141, glutamine 162, 188 to 193, 234 to 236, and 240 to 244; these read SN, WSPLGS, KST, and RIQEN. Residues 264 to 283 form a disordered region; sequence NEDKRIGGDPDNFFPGGEEA.

It belongs to the aldo/keto reductase family. In terms of assembly, monomer.

Its subcellular location is the cytoplasm. The catalysed reaction is prostaglandin F2alpha + NADP(+) = prostaglandin H2 + NADPH + H(+). It participates in lipid metabolism; prostaglandin biosynthesis. Its function is as follows. Catalyzes the NADP-dependent formation of prostaglandin F2-alpha from prostaglandin H2. Also has aldo/ketoreductase activity towards the synthetic substrates 9,10-phenanthrenequinone and p-nitrobenzaldehyde. The protein is 9,11-endoperoxide prostaglandin H2 reductase of Trypanosoma cruzi (strain CL Brener).